A 301-amino-acid chain; its full sequence is GTPase Era (301 aa).

The Era-type G domain occupies 7–175 (YCGFVAIVGR…AAIVRKHLPE (169 aa)). Positions 15–22 (GRPNVGKS) are G1. Position 15–22 (15–22 (GRPNVGKS)) interacts with GTP. Residues 41 to 45 (QTTRH) form a G2 region. Residues 62 to 65 (DTPG) form a G3 region. GTP contacts are provided by residues 62–66 (DTPGL) and 124–127 (NKVD). Residues 124 to 127 (NKVD) are G4. A G5 region spans residues 154–156 (ISA). The 78-residue stretch at 206 to 283 (LGAELPYSVT…HLELWVKVKS (78 aa)) folds into the KH type-2 domain.

It belongs to the TRAFAC class TrmE-Era-EngA-EngB-Septin-like GTPase superfamily. Era GTPase family. Monomer.

It localises to the cytoplasm. The protein localises to the cell inner membrane. Its function is as follows. An essential GTPase that binds both GDP and GTP, with rapid nucleotide exchange. Plays a role in 16S rRNA processing and 30S ribosomal subunit biogenesis and possibly also in cell cycle regulation and energy metabolism. The sequence is that of GTPase Era from Klebsiella pneumoniae subsp. pneumoniae (strain ATCC 700721 / MGH 78578).